A 346-amino-acid polypeptide reads, in one-letter code: Annexin A1 (346 aa).

The residue at position 2 (Ala2) is an N-acetylalanine. Ser5 carries the post-translational modification Phosphoserine; by TRPM7. An Isoglutamyl lysine isopeptide (Gln-Lys) (interchain with K-?) cross-link involves residue Gln19. Tyr21 carries the phosphotyrosine; by EGFR modification. Ser27 is modified (phosphoserine; by PKC). A phosphoserine mark is found at Ser34 and Ser37. Annexin repeat units follow at residues 42–113 (FNPS…AMLK), 114–185 (TPAQ…ALAK), 197–269 (DLAD…TIVK), and 273–344 (STPA…ALCG). N6-acetyllysine is present on Lys58. Residues Gly59, Val60, Glu62, Lys97, Leu100, Glu105, Met127, Gly129, Gly131, Thr132, and Glu134 each contribute to the Ca(2+) site. At Thr136 the chain carries Phosphothreonine. Positions 171, 210, and 213 each coordinate Ca(2+). A Glycyl lysine isopeptide (Lys-Gly) (interchain with G-Cter in SUMO1); alternate cross-link involves residue Lys214. A Glycyl lysine isopeptide (Lys-Gly) (interchain with G-Cter in SUMO2); alternate cross-link involves residue Lys214. Gly215, Asp253, Glu255, and Leu256 together coordinate Ca(2+). Lys257 participates in a covalent cross-link: Glycyl lysine isopeptide (Lys-Gly) (interchain with G-Cter in SUMO1). Residues Glu261, Met286, Gly288, and Gly290 each contribute to the Ca(2+) site. At Lys312 the chain carries N6-acetyllysine. Cys324 and Cys343 form a disulfide bridge. Ca(2+)-binding residues include Leu328, Glu330, and Thr331. Lys332 is covalently cross-linked (Glycyl lysine isopeptide (Lys-Gly) (interchain with G-Cter in SUMO1)). A Ca(2+)-binding site is contributed by Glu336.

Belongs to the annexin family. As to quaternary structure, homodimer; non-covalently linked. Homodimer; linked by transglutamylation. Homodimers linked by transglutamylation are observed in placenta, but not in other tissues. Interacts with S100A11. Heterotetramer, formed by two molecules each of S100A11 and ANXA1. Interacts with DYSF. Interacts with EGFR. Post-translationally, phosphorylated by protein kinase C, EGFR and TRPM7. Phosphorylated in response to EGF treatment. Sumoylated. In terms of processing, proteolytically cleaved by cathepsin CTSG to release the active N-terminal peptide Ac2-26. Detected in eosinophils. Detected in lung, placenta, spleen and thymus (at protein level).

Its subcellular location is the nucleus. It localises to the cytoplasm. It is found in the cell projection. The protein resides in the cilium. The protein localises to the basolateral cell membrane. Its subcellular location is the lateral cell membrane. It localises to the cell membrane. It is found in the apical cell membrane. The protein resides in the membrane. The protein localises to the endosome membrane. Its subcellular location is the secreted. It localises to the extracellular space. It is found in the early endosome. The protein resides in the cytoplasmic vesicle membrane. The protein localises to the extracellular exosome. Its subcellular location is the cytoplasmic vesicle. It localises to the secretory vesicle lumen. It is found in the phagocytic cup. In terms of biological role, plays important roles in the innate immune response as effector of glucocorticoid-mediated responses and regulator of the inflammatory process. Has anti-inflammatory activity. Plays a role in glucocorticoid-mediated down-regulation of the early phase of the inflammatory response. Contributes to the adaptive immune response by enhancing signaling cascades that are triggered by T-cell activation, regulates differentiation and proliferation of activated T-cells. Promotes the differentiation of T-cells into Th1 cells and negatively regulates differentiation into Th2 cells. Has no effect on unstimulated T-cells. Negatively regulates hormone exocytosis via activation of the formyl peptide receptors and reorganization of the actin cytoskeleton. Has high affinity for Ca(2+) and can bind up to eight Ca(2+) ions. Displays Ca(2+)-dependent binding to phospholipid membranes. Plays a role in the formation of phagocytic cups and phagosomes. Plays a role in phagocytosis by mediating the Ca(2+)-dependent interaction between phagosomes and the actin cytoskeleton. Functionally, functions at least in part by activating the formyl peptide receptors and downstream signaling cascades. Promotes chemotaxis of granulocytes and monocytes via activation of the formyl peptide receptors. Promotes rearrangement of the actin cytoskeleton, cell polarization and cell migration. Promotes resolution of inflammation and wound healing. Acts via neutrophil N-formyl peptide receptors to enhance the release of CXCL2. The protein is Annexin A1 (Anxa1) of Rattus norvegicus (Rat).